The following is a 346-amino-acid chain: Biotin synthase (346 aa).

Over residues M1 to E12 the composition is skewed to polar residues. Positions M1 to A21 are disordered. The 229-residue stretch at N64–R292 folds into the Radical SAM core domain. Positions 79, 83, and 86 each coordinate [4Fe-4S] cluster. [2Fe-2S] cluster is bound by residues C123, C155, C215, and R287.

This sequence belongs to the radical SAM superfamily. Biotin synthase family. In terms of assembly, homodimer. The cofactor is [4Fe-4S] cluster. [2Fe-2S] cluster is required as a cofactor.

The catalysed reaction is (4R,5S)-dethiobiotin + (sulfur carrier)-SH + 2 reduced [2Fe-2S]-[ferredoxin] + 2 S-adenosyl-L-methionine = (sulfur carrier)-H + biotin + 2 5'-deoxyadenosine + 2 L-methionine + 2 oxidized [2Fe-2S]-[ferredoxin]. It functions in the pathway cofactor biosynthesis; biotin biosynthesis; biotin from 7,8-diaminononanoate: step 2/2. In terms of biological role, catalyzes the conversion of dethiobiotin (DTB) to biotin by the insertion of a sulfur atom into dethiobiotin via a radical-based mechanism. This is Biotin synthase from Myxococcus xanthus (strain DK1622).